Reading from the N-terminus, the 305-residue chain is NDP-polyphosphate phosphotransferase 1 (305 aa).

The protein belongs to the polyphosphate kinase 2 (PPK2) family. Class I subfamily.

The catalysed reaction is [phosphate](n) + ATP = [phosphate](n+1) + ADP. It catalyses the reaction [phosphate](n) + CTP = [phosphate](n+1) + CDP. The enzyme catalyses [phosphate](n) + GTP = [phosphate](n+1) + GDP. It carries out the reaction [phosphate](n) + UTP = [phosphate](n+1) + UDP. Its activity is regulated as follows. Shows little dependence on metals. In terms of biological role, uses inorganic polyphosphate (polyP) as a donor to convert NDP to NTP. PolyP hydrolysis is slightly faster with GDP, but it can also use ADP, CDP and UDP. The chain is NDP-polyphosphate phosphotransferase 1 from Ruegeria pomeroyi (strain ATCC 700808 / DSM 15171 / DSS-3) (Silicibacter pomeroyi).